Reading from the N-terminus, the 460-residue chain is MSPCKLLPFCVALALTGCSLAPDYQRPAMPVPQQFSLSQNGLVNAADNYQNAGWRTFFVDNQVKTLISEALVNNRDLRMAALKVQEARAQYRLTDADRYPQLNGEGSGSWSGNLKGDSATTREFSTGLNASFDLDFFGRLKNMSEAERQNYLATEEAQRAVHILLVSNVAQSYFNQQLAYAQLQIAEETLRNYQQSYAFVEKQLLTGSSNVLALEQARGVIESTRSDIAKRQGELAQANNALQLLLGSYGKLPQAQTVNSDSLQSVKLPAGLPSQILLQRPDIMEAEHALMAANANIGAARAAFFPSISLTSGISTASSDLSSLFNASSGMWNFIPKIEIPIFNAGRNQANLDIAEIRQQQSVVNYEQKIQNAFKEVADALALRQSLNDQISAQQRYLASLQITLQRARTLYQHGAVSYLEVLDAERSLFATRQTLLDLNYARQVNEISLYTALGGGWQQ.

The signal sequence occupies residues 1–17 (MSPCKLLPFCVALALTG). Cys-18 carries N-palmitoyl cysteine lipidation. Residue Cys-18 is the site of S-diacylglycerol cysteine attachment.

Belongs to the outer membrane factor (OMF) (TC 1.B.17) family. As to quaternary structure, homotrimer. Component of the cus efflux system composed of CusA, CusB, CusC and CusF.

It localises to the cell outer membrane. Its function is as follows. Forms pores that allow passive diffusion of cations across the outer membrane. Part of a cation efflux system that mediates resistance to copper and silver. The polypeptide is Cation efflux system protein CusC (cusC) (Escherichia coli O6:H1 (strain CFT073 / ATCC 700928 / UPEC)).